The following is a 394-amino-acid chain: Glycogen synthase kinase 1 (394 aa).

In terms of domain architecture, Protein kinase spans 35-318 (YTQCKIVGNG…AIDAMVHPFF (284 aa)). Residues 41 to 49 (VGNGSFGVV) and K64 each bind ATP.

The protein belongs to the protein kinase superfamily. CMGC Ser/Thr protein kinase family. GSK-3 subfamily.

The protein resides in the cytoplasm. The catalysed reaction is L-seryl-[protein] + ATP = O-phospho-L-seryl-[protein] + ADP + H(+). Its function is as follows. Protein kinase that acts downstream of the MPS1 MAPK cascade as a highly conservative signal modulator that dictates growth, conidiation and pathogenicity. Phosphorylates HAT1 at 'Ser-8' to block its translocation from the nucleus to the cytoplasm where HAT1 positively regulates appressorium development and pathogenicity. The chain is Glycogen synthase kinase 1 from Pyricularia oryzae (Rice blast fungus).